The primary structure comprises 306 residues: Methionyl-tRNA formyltransferase (306 aa).

Serine 110–proline 113 serves as a coordination point for (6S)-5,6,7,8-tetrahydrofolate.

Belongs to the Fmt family.

It carries out the reaction L-methionyl-tRNA(fMet) + (6R)-10-formyltetrahydrofolate = N-formyl-L-methionyl-tRNA(fMet) + (6S)-5,6,7,8-tetrahydrofolate + H(+). Attaches a formyl group to the free amino group of methionyl-tRNA(fMet). The formyl group appears to play a dual role in the initiator identity of N-formylmethionyl-tRNA by promoting its recognition by IF2 and preventing the misappropriation of this tRNA by the elongation apparatus. The polypeptide is Methionyl-tRNA formyltransferase (Brucella anthropi (strain ATCC 49188 / DSM 6882 / CCUG 24695 / JCM 21032 / LMG 3331 / NBRC 15819 / NCTC 12168 / Alc 37) (Ochrobactrum anthropi)).